A 231-amino-acid chain; its full sequence is Uracil-DNA glycosylase (231 aa).

Aspartate 74 acts as the Proton acceptor in catalysis.

The protein belongs to the uracil-DNA glycosylase (UDG) superfamily. UNG family.

It is found in the cytoplasm. It carries out the reaction Hydrolyzes single-stranded DNA or mismatched double-stranded DNA and polynucleotides, releasing free uracil.. Its function is as follows. Excises uracil residues from the DNA which can arise as a result of misincorporation of dUMP residues by DNA polymerase or due to deamination of cytosine. The polypeptide is Uracil-DNA glycosylase (Campylobacter jejuni subsp. jejuni serotype O:23/36 (strain 81-176)).